We begin with the raw amino-acid sequence, 205 residues long: Small ribosomal subunit protein uS4 (205 aa).

An S4 RNA-binding domain is found at S94–V172.

Belongs to the universal ribosomal protein uS4 family. In terms of assembly, part of the 30S ribosomal subunit. Contacts protein S5. The interaction surface between S4 and S5 is involved in control of translational fidelity.

One of the primary rRNA binding proteins, it binds directly to 16S rRNA where it nucleates assembly of the body of the 30S subunit. In terms of biological role, with S5 and S12 plays an important role in translational accuracy. The sequence is that of Small ribosomal subunit protein uS4 from Rickettsia bellii (strain OSU 85-389).